A 455-amino-acid polypeptide reads, in one-letter code: Anthocyanidin 3-O-glucosyltransferase (455 aa).

The active-site Proton acceptor is His18. His18 is an an anthocyanidin binding site. Residue Asp118 is the Charge relay of the active site. UDP-alpha-D-glucose is bound at residue Thr139. His148 contacts an anthocyanidin. UDP-alpha-D-glucose-binding residues include Ala336, Gln338, His353, Trp356, Ser358, and Glu361. Gly376 is a binding site for an anthocyanidin. Asp377 and Gln378 together coordinate UDP-alpha-D-glucose.

It belongs to the UDP-glycosyltransferase family.

It carries out the reaction an anthocyanidin + UDP-alpha-D-glucose + H(+) = an anthocyanidin 3-O-beta-D-glucoside + UDP. Its pathway is pigment biosynthesis; anthocyanin biosynthesis. In terms of biological role, in the presence of other necessary color factors, this glycosylation reaction allows the accumulation of anthocyanin pigments. The chain is Anthocyanidin 3-O-glucosyltransferase (BZ1) from Hordeum vulgare (Barley).